The following is a 444-amino-acid chain: Trigger factor (444 aa).

Residues glycine 166–alanine 251 enclose the PPIase FKBP-type domain.

It belongs to the FKBP-type PPIase family. Tig subfamily.

The protein resides in the cytoplasm. The catalysed reaction is [protein]-peptidylproline (omega=180) = [protein]-peptidylproline (omega=0). Involved in protein export. Acts as a chaperone by maintaining the newly synthesized protein in an open conformation. Functions as a peptidyl-prolyl cis-trans isomerase. The protein is Trigger factor of Cereibacter sphaeroides (strain KD131 / KCTC 12085) (Rhodobacter sphaeroides).